The primary structure comprises 206 residues: Large ribosomal subunit protein bL25 (206 aa).

The tract at residues 1–91 (MEYRLKAYYR…RPEHVDFFVL (91 aa)) is bL25 domain. The tract at residues 92–206 (SDEPVEMYVP…IKKGKEEEEE (115 aa)) is CTC domain. Residues 184–206 (AEEAAAEVAEPEVIKKGKEEEEE) form a disordered region. The span at 195–206 (EVIKKGKEEEEE) shows a compositional bias: basic and acidic residues.

This sequence belongs to the bacterial ribosomal protein bL25 family. CTC subfamily. In terms of assembly, part of the 50S ribosomal subunit. Contacts the 5S rRNA.

This is one of 3 proteins that mediate the attachment of the 5S rRNA onto the large ribosomal subunit. This Thermus thermophilus protein is Large ribosomal subunit protein bL25 (rplY).